The following is a 188-amino-acid chain: Ribosomal RNA small subunit methyltransferase G (188 aa).

S-adenosyl-L-methionine is bound by residues Gly-69, Phe-74, 119-120 (VQ), and Arg-134.

It belongs to the methyltransferase superfamily. RNA methyltransferase RsmG family.

The protein resides in the cytoplasm. The enzyme catalyses guanosine(527) in 16S rRNA + S-adenosyl-L-methionine = N(7)-methylguanosine(527) in 16S rRNA + S-adenosyl-L-homocysteine. Specifically methylates the N7 position of guanine in position 527 of 16S rRNA. The sequence is that of Ribosomal RNA small subunit methyltransferase G from Campylobacter jejuni subsp. doylei (strain ATCC BAA-1458 / RM4099 / 269.97).